Consider the following 87-residue polypeptide: Small ribosomal subunit protein bS18 (87 aa).

It belongs to the bacterial ribosomal protein bS18 family. Part of the 30S ribosomal subunit. Forms a tight heterodimer with protein bS6.

In terms of biological role, binds as a heterodimer with protein bS6 to the central domain of the 16S rRNA, where it helps stabilize the platform of the 30S subunit. The sequence is that of Small ribosomal subunit protein bS18 from Sulfurimonas denitrificans (strain ATCC 33889 / DSM 1251) (Thiomicrospira denitrificans (strain ATCC 33889 / DSM 1251)).